Consider the following 115-residue polypeptide: Immunoglobulin kappa variable 5-2 (115 aa).

The N-terminal stretch at 1–20 (MGSQVHLLSFLLLWISDTRA) is a signal peptide. Residues 21–43 (ETTLTQSPAFMSATPGDKVNISC) form a framework-1 region. The region spanning 22–115 (TTLTQSPAFM…YFCLQHDNFP (94 aa)) is the Ig-like domain. An N-linked (GlcNAc...) asparagine glycan is attached at asparagine 40. Serine 42 is modified (phosphoserine). Residues cysteine 43 and cysteine 108 are joined by a disulfide bond. The interval 44 to 54 (KASQDIDDDMN) is complementarity-determining-1. Residues 55 to 69 (WYQQKPGEAAIFIIQ) form a framework-2 region. The interval 70-76 (EATTLVP) is complementarity-determining-2. Positions 77 to 108 (GIPPRFSGSGYGTDFTLTINNIESEDAAYYFC) are framework-3. The interval 109–115 (LQHDNFP) is complementarity-determining-3.

In terms of assembly, immunoglobulins are composed of two identical heavy chains and two identical light chains; disulfide-linked.

It is found in the secreted. It localises to the cell membrane. Functionally, v region of the variable domain of immunoglobulin light chains that participates in the antigen recognition. Immunoglobulins, also known as antibodies, are membrane-bound or secreted glycoproteins produced by B lymphocytes. In the recognition phase of humoral immunity, the membrane-bound immunoglobulins serve as receptors which, upon binding of a specific antigen, trigger the clonal expansion and differentiation of B lymphocytes into immunoglobulins-secreting plasma cells. Secreted immunoglobulins mediate the effector phase of humoral immunity, which results in the elimination of bound antigens. The antigen binding site is formed by the variable domain of one heavy chain, together with that of its associated light chain. Thus, each immunoglobulin has two antigen binding sites with remarkable affinity for a particular antigen. The variable domains are assembled by a process called V-(D)-J rearrangement and can then be subjected to somatic hypermutations which, after exposure to antigen and selection, allow affinity maturation for a particular antigen. The chain is Immunoglobulin kappa variable 5-2 from Homo sapiens (Human).